Consider the following 289-residue polypeptide: Pantoate kinase (289 aa).

Belongs to the GHMP kinase family. PoK subfamily.

The enzyme catalyses (R)-pantoate + ATP = (R)-4-phosphopantoate + ADP + H(+). It functions in the pathway cofactor biosynthesis; coenzyme A biosynthesis. Phosphorylates (R)-pantoate to form (R)-4-phosphopantoate in the CoA biosynthesis pathway. ATP is the best phosphate donor. Can be replaced with UTP, with lower efficiency. The chain is Pantoate kinase from Methanospirillum hungatei JF-1 (strain ATCC 27890 / DSM 864 / NBRC 100397 / JF-1).